A 366-amino-acid chain; its full sequence is Glutamate 5-kinase (366 aa).

Lys17 contributes to the ATP binding site. Ser57, Asp144, and Asn156 together coordinate substrate. ATP is bound by residues 176-177 (SD) and 216-222 (TGGMVSK). The PUA domain occupies 278 to 356 (SGALTLDDGA…SDLPAEMRRP (79 aa)).

Belongs to the glutamate 5-kinase family.

The protein localises to the cytoplasm. It carries out the reaction L-glutamate + ATP = L-glutamyl 5-phosphate + ADP. It participates in amino-acid biosynthesis; L-proline biosynthesis; L-glutamate 5-semialdehyde from L-glutamate: step 1/2. Functionally, catalyzes the transfer of a phosphate group to glutamate to form L-glutamate 5-phosphate. In Mycolicibacterium vanbaalenii (strain DSM 7251 / JCM 13017 / BCRC 16820 / KCTC 9966 / NRRL B-24157 / PYR-1) (Mycobacterium vanbaalenii), this protein is Glutamate 5-kinase.